Consider the following 221-residue polypeptide: MAADTPGKPSASPMAGAPASASRTPDKPRSAAEHRKSSKPVMEKRRRARINESLAQLKTLILDALRKESSRHSKLEKADILEMTVRHLRSLRRVQVTAALSADPAVLGKYRAGFHECLAEVNRFLAGCEGVPADVRSRLLGHLAACLRQLGPSRRPASLSPAAPAEAPAPEVYAGRPLLPSLGGPFPLLAPPLLPGLTRALPAAPRAGPQGPGGPWRPWLR.

Low complexity predominate over residues 1–22; the sequence is MAADTPGKPSASPMAGAPASAS. Residues 1–49 are disordered; sequence MAADTPGKPSASPMAGAPASASRTPDKPRSAAEHRKSSKPVMEKRRRAR. Over residues 24-35 the composition is skewed to basic and acidic residues; the sequence is TPDKPRSAAEHR. In terms of domain architecture, bHLH spans 34–91; it reads HRKSSKPVMEKRRRARINESLAQLKTLILDALRKESSRHSKLEKADILEMTVRHLRSL. Residues 110–143 enclose the Orange domain; sequence YRAGFHECLAEVNRFLAGCEGVPADVRSRLLGHL. A disordered region spans residues 201-221; it reads LPAAPRAGPQGPGGPWRPWLR. Residues 216 to 219 carry the WRPW motif motif; it reads WRPW.

Transcription repression requires formation of a complex with a corepressor protein of the Groucho/TLE family.

It is found in the nucleus. Functionally, transcriptional repressor. Binds DNA on N-box motifs: 5'-CACNAG-3'. This Homo sapiens (Human) protein is Transcription factor HES-4 (HES4).